The following is a 352-amino-acid chain: Neutral protease 2 (352 aa).

The N-terminal stretch at 1 to 19 (MRVTTLSTALFALASTAVS) is a signal peptide. Residues 20-175 (APTAGSSSPG…TKALSQLTRR (156 aa)) constitute a propeptide that is removed on maturation. 3 cysteine pairs are disulfide-bonded: cysteine 181-cysteine 253, cysteine 260-cysteine 278, and cysteine 292-cysteine 352. A Zn(2+)-binding site is contributed by histidine 303. Residue glutamate 304 is part of the active site. Positions 307 and 318 each coordinate Zn(2+).

Belongs to the peptidase M35 family. Zn(2+) is required as a cofactor.

It catalyses the reaction Preferential cleavage of bonds with hydrophobic residues in P1'. Also 3-Asn-|-Gln-4 and 8-Gly-|-Ser-9 bonds in insulin B chain.. Functionally, metalloprotease that shows high activities on basic nuclear substrates such as histone and protamine. This chain is Neutral protease 2, found in Aspergillus oryzae (strain ATCC 42149 / RIB 40) (Yellow koji mold).